The chain runs to 395 residues: Dihydroorotate dehydrogenase (quinone), mitochondrial (395 aa).

Residues 1–10 constitute a mitochondrion; not cleaved transit peptide; the sequence is MAWRQLKKRA. Residues 1-10 are Mitochondrial matrix-facing; the sequence is MAWRQLKKRA. A helical transmembrane segment spans residues 11–30; sequence QDAMVILGGGGLLFASYLTA. Topologically, residues 31–395 are mitochondrial intermembrane; it reads TGDEHFYAEL…TDAIGADHRR (365 aa). FMN is bound by residues 95 to 99 and S119; that span reads AGFDK. K99 contributes to the substrate binding site. A substrate-binding site is contributed by 144 to 148; that stretch reads NRYGF. FMN-binding residues include N180 and N211. Substrate is bound at residue 211–216; it reads NVSSPN. S214 functions as the Nucleophile in the catalytic mechanism. K254 and T282 together coordinate FMN. 283–284 lines the substrate pocket; the sequence is NS. FMN is bound by residues G305, G334, and 355–356; that span reads YT.

The protein belongs to the dihydroorotate dehydrogenase family. Type 2 subfamily. Monomer. The cofactor is FMN. In terms of processing, the uncleaved transit peptide is required for mitochondrial targeting and proper membrane integration.

The protein localises to the mitochondrion inner membrane. It catalyses the reaction (S)-dihydroorotate + a quinone = orotate + a quinol. It participates in pyrimidine metabolism; UMP biosynthesis via de novo pathway; orotate from (S)-dihydroorotate (quinone route): step 1/1. Its function is as follows. Catalyzes the conversion of dihydroorotate to orotate with quinone as electron acceptor. Required for UMP biosynthesis via de novo pathway. The chain is Dihydroorotate dehydrogenase (quinone), mitochondrial (DHODH) from Bos taurus (Bovine).